The chain runs to 604 residues: Proline--tRNA ligase (604 aa).

Belongs to the class-II aminoacyl-tRNA synthetase family. ProS type 1 subfamily. In terms of assembly, homodimer.

The protein resides in the cytoplasm. It catalyses the reaction tRNA(Pro) + L-proline + ATP = L-prolyl-tRNA(Pro) + AMP + diphosphate. Its function is as follows. Catalyzes the attachment of proline to tRNA(Pro) in a two-step reaction: proline is first activated by ATP to form Pro-AMP and then transferred to the acceptor end of tRNA(Pro). As ProRS can inadvertently accommodate and process non-cognate amino acids such as alanine and cysteine, to avoid such errors it has two additional distinct editing activities against alanine. One activity is designated as 'pretransfer' editing and involves the tRNA(Pro)-independent hydrolysis of activated Ala-AMP. The other activity is designated 'posttransfer' editing and involves deacylation of mischarged Ala-tRNA(Pro). The misacylated Cys-tRNA(Pro) is not edited by ProRS. This is Proline--tRNA ligase from Nostoc punctiforme (strain ATCC 29133 / PCC 73102).